A 447-amino-acid chain; its full sequence is Glycogen synthase (447 aa).

Arginine 15 is a binding site for ADP-alpha-D-glucose.

The protein belongs to the glycosyltransferase 1 family. Bacterial/plant glycogen synthase subfamily.

The catalysed reaction is [(1-&gt;4)-alpha-D-glucosyl](n) + ADP-alpha-D-glucose = [(1-&gt;4)-alpha-D-glucosyl](n+1) + ADP + H(+). It functions in the pathway glycan biosynthesis; glycogen biosynthesis. Its function is as follows. Synthesizes alpha-1,4-glucan chains using ADP-glucose. This is Glycogen synthase from Deinococcus geothermalis (strain DSM 11300 / CIP 105573 / AG-3a).